The following is a 983-amino-acid chain: MTSTSARPARRSRAPLAITAAIIAALVIAFFIFAGFYADVLWYDQLGYLGVLLTQWGAGIALFLVGFLAMAIPVFVSIQVAYRSRPVYAKLNSQLDRYQQVVEPLRRLAMFAIPAVFGLFAGVSASSGWQRTLLWLNRTPSGTVDPQFQLDTSFYMFELPFYHAVVGFASAVVIISMLGVLATSYLYGAVRFTGREVRISKSSRIQIAITAGVYFLLQGVSIWLDQYSSVVNNANGGLFTGAAYSDVNAVIPGRAILAGIAGVVALFFIVTAVIGRWRLPIIGTAGLIVASILVGTAYPAIVQRFQVEPNERALESQYYERNIEATRQAYGLADIEEIPYDATTDTTPGALREDAATTANIRILDPAVVGDAFSQLQQFRQYYQFGDNLDVDRYQIDGRVQDTVVAVRELSPTNTGTSWVNQHLVYTHGYSLVAAYGTQRTSDGQPVFLESGIPASGDLGDFEPRVYFGENSPDYSIVGGPESGDKVELDYPSGVDGADETYTTFQGDGGPKVDNVFKRLIYALKFQSEQIFLANQINDQSQIIYDRDPAERVGKVAPYLTIDKDPYPSVVDGRVVWIVDGYTTSDQYPYSQRQDMSRLIADSQQTQPLVPTDQINYIRNSVKATVDAYDGKVTLYAWDTDDPILKTWQKVFPSTLKPISDISGELMSHLRFPADMFKVQRAVLGKYHVTDPGSIYSNQDLWTTPNDPTATTEAGTPASLQPPYYLTMQMPGQDAPRFSLYSTFIPPATQDTSRSVLTGYLGVDSDAGSTAGEKAADYGKLRLLTLPNDDTIPAPTQIQNNFNSDTNVANQLNLLERGGRTSVVRGNLLTLPVGGGLLYVQPVYVRSTGDTSYPLLRKVLVAFGDKIAFEDTLDAALDSIFEGDSGATAGDEDVVPTTPVDGGTGDGATDGATDGGTGSTPTPAPTTSPSAPAQDVQAALDAANTALQERQAAYASGDLVAAAQADQRFTEAVQRAYELSQQQ.

Helical transmembrane passes span 16-36, 56-76, 108-128, 161-181, 205-225, 255-275, and 281-301; these read LAIT…FAGF, WGAG…PVFV, LAMF…ASSG, FYHA…LGVL, IQIA…IWLD, AILA…AVIG, and IIGT…YPAI. Residues 699 to 714 show a composition bias toward polar residues; it reads QDLWTTPNDPTATTEA. 2 disordered regions span residues 699–718 and 884–936; these read QDLW…GTPA and DSGA…AQDV. Residues 902–918 show a composition bias toward gly residues; that stretch reads GGTGDGATDGATDGGTG. Residues 919–933 are compositionally biased toward low complexity; the sequence is STPTPAPTTSPSAPA.

The protein belongs to the UPF0182 family.

Its subcellular location is the cell membrane. This is UPF0182 protein CMM_1204 from Clavibacter michiganensis subsp. michiganensis (strain NCPPB 382).